We begin with the raw amino-acid sequence, 228 residues long: ATP-dependent dethiobiotin synthetase BioD (228 aa).

12-17 (EIGKTT) contributes to the ATP binding site. Thr16 provides a ligand contact to Mg(2+). Lys37 is a catalytic residue. Ser41 contacts substrate. ATP-binding positions include Asp54, 116-119 (EGAG), and 205-207 (PRL). Mg(2+) contacts are provided by Asp54 and Glu116.

Belongs to the dethiobiotin synthetase family. In terms of assembly, homodimer. It depends on Mg(2+) as a cofactor.

Its subcellular location is the cytoplasm. The catalysed reaction is (7R,8S)-7,8-diammoniononanoate + CO2 + ATP = (4R,5S)-dethiobiotin + ADP + phosphate + 3 H(+). It participates in cofactor biosynthesis; biotin biosynthesis; biotin from 7,8-diaminononanoate: step 1/2. Catalyzes a mechanistically unusual reaction, the ATP-dependent insertion of CO2 between the N7 and N8 nitrogen atoms of 7,8-diaminopelargonic acid (DAPA, also called 7,8-diammoniononanoate) to form a ureido ring. The polypeptide is ATP-dependent dethiobiotin synthetase BioD (Pseudomonas paraeruginosa (strain DSM 24068 / PA7) (Pseudomonas aeruginosa (strain PA7))).